The following is a 271-amino-acid chain: Formamidopyrimidine-DNA glycosylase (271 aa).

Catalysis depends on Pro2, which acts as the Schiff-base intermediate with DNA. Glu3 acts as the Proton donor in catalysis. Lys57 (proton donor; for beta-elimination activity) is an active-site residue. Positions 90, 109, and 150 each coordinate DNA. The FPG-type zinc finger occupies 235–269 (LVYGNKDKPCPKCGGKIESLIIGQRNSFFCPKCQK). Arg259 acts as the Proton donor; for delta-elimination activity in catalysis.

The protein belongs to the FPG family. As to quaternary structure, monomer. Requires Zn(2+) as cofactor.

It carries out the reaction Hydrolysis of DNA containing ring-opened 7-methylguanine residues, releasing 2,6-diamino-4-hydroxy-5-(N-methyl)formamidopyrimidine.. It catalyses the reaction 2'-deoxyribonucleotide-(2'-deoxyribose 5'-phosphate)-2'-deoxyribonucleotide-DNA = a 3'-end 2'-deoxyribonucleotide-(2,3-dehydro-2,3-deoxyribose 5'-phosphate)-DNA + a 5'-end 5'-phospho-2'-deoxyribonucleoside-DNA + H(+). In terms of biological role, involved in base excision repair of DNA damaged by oxidation or by mutagenic agents. Acts as a DNA glycosylase that recognizes and removes damaged bases. Has a preference for oxidized purines, such as 7,8-dihydro-8-oxoguanine (8-oxoG). Has AP (apurinic/apyrimidinic) lyase activity and introduces nicks in the DNA strand. Cleaves the DNA backbone by beta-delta elimination to generate a single-strand break at the site of the removed base with both 3'- and 5'-phosphates. In Haemophilus influenzae (strain PittEE), this protein is Formamidopyrimidine-DNA glycosylase.